Here is a 223-residue protein sequence, read N- to C-terminus: Neurotrophic factor BDNF precursor form (223 aa).

An N-terminal signal peptide occupies residues 1–5; sequence SCMKA. A propeptide spanning residues 6 to 114 is cleaved from the precursor; sequence APMKEVSLRG…AANMSMRVRR (109 aa). N-linked (GlcNAc...) asparagine glycosylation is present at Asn107. 2 disulfide bridges follow: Cys127/Cys194 and Cys172/Cys223.

This sequence belongs to the NGF-beta family.

Its subcellular location is the secreted. Its function is as follows. Promotes the survival of neuronal populations that are all located either in the central nervous system or directly connected to it. The protein is Neurotrophic factor BDNF precursor form (BDNF) of Ramphotyphlops sp. (strain YPM 13663) (Blind snake).